The chain runs to 601 residues: COP9 signalosome complex subunit 1 (601 aa).

The segment covering 1–10 has biased composition (acidic residues); it reads MQNELLDDPM. Disordered stretches follow at residues 1–54 and 268–294; these read MQNE…LDNP and DADD…PYMV. A compositionally biased stretch (low complexity) spans 14 to 24; it reads APAAEAAAADE. The 163-residue stretch at 338–500 folds into the PCI domain; it reads TILQIKTECL…GIVRILDERD (163 aa). Residues 535-581 are disordered; the sequence is SISDKETRPKRKNQKESAKFDRNFGGIDVDEDPRGIAGPSGLSDDFN.

Belongs to the CSN1 family. As to quaternary structure, component of the CSN complex, probably composed of csn-1, csn-2, csn-3, csn-4, csn-5, csn-6 and csn-7. Within the complex it probably interacts directly with csn-2, csn-4 and csn-5. May interact with itself. Interacts with rbx-1.

The protein resides in the cytoplasm. The protein localises to the nucleus. In terms of biological role, essential component of the COP9 signalosome complex (CSN), a complex involved in various cellular and developmental processes. The CSN complex is an essential regulator of the ubiquitin (Ubl) conjugation pathway by mediating the deneddylation of the cullin subunits of the SCF-type E3 ligase complexes, leading to decrease the Ubl ligase activity of SCF. The CSN complex plays an essential role in embryogenesis and oogenesis and is required to regulate microtubule stability in the early embryo. Mediates mei-3/katanin targeting for degradation at the meiosis to mitosis transition via deneddylation of cul-3. The polypeptide is COP9 signalosome complex subunit 1 (csn-1) (Caenorhabditis elegans).